The primary structure comprises 159 residues: Large ribosomal subunit protein bL17 (159 aa).

Over residues 119-138 (PVTPKAKPAKSTAKAAPKSK) the composition is skewed to low complexity. The segment at 119-159 (PVTPKAKPAKSTAKAAPKSKAPVEETPDEPASEETAEAEAD) is disordered. Positions 143–159 (ETPDEPASEETAEAEAD) are enriched in acidic residues.

The protein belongs to the bacterial ribosomal protein bL17 family. As to quaternary structure, part of the 50S ribosomal subunit. Contacts protein L32.

The sequence is that of Large ribosomal subunit protein bL17 from Leifsonia xyli subsp. xyli (strain CTCB07).